Reading from the N-terminus, the 1132-residue chain is Sentrin-specific protease 6 (1132 aa).

Disordered regions lie at residues 23–51 (SKRD…DGAN) and 327–388 (LPGG…VPST). Serine 41, serine 355, serine 356, serine 371, and serine 373 each carry phosphoserine. The residue at position 436 (threonine 436) is a Phosphothreonine. Lysine 648 participates in a covalent cross-link: Glycyl lysine isopeptide (Lys-Gly) (interchain with G-Cter in SUMO2). The protease stretch occupies residues 686–1132 (ISVTNEDLHC…QYASASGGSE (447 aa)). Active-site residues include histidine 785 and aspartate 936. Position 938 is a phosphoserine (serine 938). The active site involves cysteine 1049. Serine 1131 bears the Phosphoserine mark.

This sequence belongs to the peptidase C48 family. Interacts with RXRA. Forms a complex with KAT5-TIP60 and UBE2I in response to UV irradiation. Interacts with RPA1 to maintain it in hyposumoylated state during S phase preventing DNA repair initiation.

It localises to the nucleus. It participates in protein modification; protein sumoylation. In terms of biological role, protease that deconjugates SUMO1, SUMO2 and SUMO3 from targeted proteins. Processes preferentially poly-SUMO2 and poly-SUMO3 chains, but does not efficiently process SUMO1, SUMO2 and SUMO3 precursors. Deconjugates SUMO1 from RXRA, leading to transcriptional activation. Involved in chromosome alignment and spindle assembly, by regulating the kinetochore CENPH-CENPI-CENPK complex. Desumoylates PML and CENPI, protecting them from degradation by the ubiquitin ligase RNF4, which targets polysumoylated proteins for proteasomal degradation. Also desumoylates RPA1, thus preventing recruitment of RAD51 to the DNA damage foci to initiate DNA repair through homologous recombination. In Mus musculus (Mouse), this protein is Sentrin-specific protease 6 (Senp6).